The primary structure comprises 182 residues: Plasmolipin (182 aa).

The Cytoplasmic segment spans residues 1–35 (MAEFPSKVSTRTSSPAQGVGASVSALRPDLGFVRS). Ser9 is modified (phosphoserine). One can recognise an MARVEL domain in the interval 32 to 166 (FVRSALGVLA…SAFFSFQAWR (135 aa)). Residues 36-56 (ALGVLALLQLALGLLVWALIA) traverse the membrane as a helical segment. The Extracellular portion of the chain corresponds to 57 to 68 (DTPYHLYPAYGW). The chain crosses the membrane as a helical span at residues 69 to 89 (VMFVAVFLWLVTIVFFIIYLF). The Cytoplasmic segment spans residues 90–99 (QLHMKLYMVP). The helical transmembrane segment at 100–120 (WPLVLLIFFVAATVLYITAFI) threads the bilayer. Residues 121 to 141 (ACAAAVDLTSLRGSRPYNQRS) lie on the Extracellular side of the membrane. The helical transmembrane segment at 142–162 (AASFFACLVMIAYGVSAFFSF) threads the bilayer. Over 163 to 182 (QAWRGVGSNAATSQMAGGYS) the chain is Cytoplasmic.

Belongs to the MAL family. In terms of assembly, forms oligomers. In terms of processing, phosphorylated.

The protein resides in the membrane. Its subcellular location is the cell membrane. The protein localises to the myelin membrane. It is found in the apical cell membrane. In terms of biological role, main component of the myelin sheath that plays an important role in myelin membrane biogenesis and myelination. Plays an essential function in apical endocytosis. Regulates epithelial development through the regulation of apical endocytosis. Part of the intracellular machinery that mediates basolateral-to-apical transport of ICAM-1, an essential adhesion receptor in epithelial cells, from the subapical compartment in hepatic epithelial cells. The sequence is that of Plasmolipin (Pllp) from Mus musculus (Mouse).